The following is a 506-amino-acid chain: H/ACA ribonucleoprotein complex subunit DKC1 (506 aa).

Residues 1–26 (MADTESKKEKKRKSKKISDEEVGDIQ) form a disordered region. The Nucleophile role is filled by Asp120. In terms of domain architecture, PUA spans 291–366 (HKRIVMKDSA…VVAKIKRVIM (76 aa)). Disordered stretches follow at residues 391-410 (GLLD…WKEG) and 419-506 (VKKG…ADSD). The segment covering 421-434 (KGGEASAKRKRDES) has biased composition (basic and acidic residues). Basic residues predominate over residues 457-466 (EKKKKKKEKK).

Belongs to the pseudouridine synthase TruB family. Part of the H/ACA small nucleolar ribonucleoprotein (H/ACA snoRNP) complex. The complex binds a box H/ACA small nucleolar RNA (snoRNA), which may target the specific site of modification within the RNA substrate.

The protein localises to the nucleus. It localises to the nucleolus. The protein resides in the cajal body. It catalyses the reaction uridine in 5S rRNA = pseudouridine in 5S rRNA. In terms of biological role, catalytic subunit of H/ACA small nucleolar ribonucleoprotein (H/ACA snoRNP) complex, which catalyzes pseudouridylation of rRNA. This involves the isomerization of uridine such that the ribose is subsequently attached to C5, instead of the normal N1. Pseudouridine ('psi') residues may serve to stabilize the conformation of rRNAs. Required for ribosome biogenesis and telomere maintenance. This chain is H/ACA ribonucleoprotein complex subunit DKC1, found in Danio rerio (Zebrafish).